We begin with the raw amino-acid sequence, 173 residues long: Crossover junction endodeoxyribonuclease RuvC (173 aa).

Active-site residues include Asp8, Glu67, and Asp139. Positions 8, 67, and 139 each coordinate Mg(2+).

This sequence belongs to the RuvC family. As to quaternary structure, homodimer which binds Holliday junction (HJ) DNA. The HJ becomes 2-fold symmetrical on binding to RuvC with unstacked arms; it has a different conformation from HJ DNA in complex with RuvA. In the full resolvosome a probable DNA-RuvA(4)-RuvB(12)-RuvC(2) complex forms which resolves the HJ. Mg(2+) is required as a cofactor.

It is found in the cytoplasm. The catalysed reaction is Endonucleolytic cleavage at a junction such as a reciprocal single-stranded crossover between two homologous DNA duplexes (Holliday junction).. In terms of biological role, the RuvA-RuvB-RuvC complex processes Holliday junction (HJ) DNA during genetic recombination and DNA repair. Endonuclease that resolves HJ intermediates. Cleaves cruciform DNA by making single-stranded nicks across the HJ at symmetrical positions within the homologous arms, yielding a 5'-phosphate and a 3'-hydroxyl group; requires a central core of homology in the junction. The consensus cleavage sequence is 5'-(A/T)TT(C/G)-3'. Cleavage occurs on the 3'-side of the TT dinucleotide at the point of strand exchange. HJ branch migration catalyzed by RuvA-RuvB allows RuvC to scan DNA until it finds its consensus sequence, where it cleaves and resolves the cruciform DNA. In Proteus mirabilis (strain HI4320), this protein is Crossover junction endodeoxyribonuclease RuvC.